Here is a 132-residue protein sequence, read N- to C-terminus: Small ribosomal subunit protein uS8 (132 aa).

The protein belongs to the universal ribosomal protein uS8 family. Part of the 30S ribosomal subunit. Contacts proteins S5 and S12.

One of the primary rRNA binding proteins, it binds directly to 16S rRNA central domain where it helps coordinate assembly of the platform of the 30S subunit. The sequence is that of Small ribosomal subunit protein uS8 from Bartonella tribocorum (strain CIP 105476 / IBS 506).